A 405-amino-acid polypeptide reads, in one-letter code: MGGVLGMILAGGEGSRLRPLTDSRTKPAVPFGGSYRLIDFALNNFVNADFLKIYVLTQFKSQSLYVHMKKGWNITGITDRFIDPIPAQMRMGKRWYDGTADAIYQNLSFIELAEPEHVCIFGSDHIYKMDIKQMLNFHKEKEAELTVSALRMPLSEASAFGVIEVDENGCMVGFEEKPTNPKSIPGDPENALVSMGNYIFNKDTLCTELEEDAAKEDSSHDFGKDIIPKLFPLGKVYVYDFTTNIIPGEKNTGYWRDVGTIEAYWQAHMDLLSEDAPFSLYNRQWQLHTHYPPLPPATILDSENSKVDINNCMISAGSYIRGAQIHKSILGFRTNVDHNTMISESVILGDVKIGANCSIRKAIIDKNVHIAPGTVIGENPEEDKKNYHVSDEGIVVIPKGAKIGY.

Residues Tyr96, Gly161, 176 to 177, and Ser194 each bind alpha-D-glucose 1-phosphate; that span reads EK.

This sequence belongs to the bacterial/plant glucose-1-phosphate adenylyltransferase family. As to quaternary structure, homotetramer.

It carries out the reaction alpha-D-glucose 1-phosphate + ATP + H(+) = ADP-alpha-D-glucose + diphosphate. It functions in the pathway glycan biosynthesis; glycogen biosynthesis. In terms of biological role, involved in the biosynthesis of ADP-glucose, a building block required for the elongation reactions to produce glycogen. Catalyzes the reaction between ATP and alpha-D-glucose 1-phosphate (G1P) to produce pyrophosphate and ADP-Glc. This chain is Glucose-1-phosphate adenylyltransferase, found in Photobacterium profundum (strain SS9).